A 420-amino-acid chain; its full sequence is Ribosome biogenesis protein WDR12 homolog (420 aa).

Residues 10 to 92 (VQVHLKTKQE…EDAIEIEYVE (83 aa)) are ubiquitin-like (UBL) domain. WD repeat units lie at residues 104 to 142 (LHDD…LTIS), 143 to 185 (GHTA…NAVD), 192 to 231 (GHER…GVEG), 250 to 288 (GHRE…IKTE), 290 to 329 (STNK…GSVV), 335 to 375 (GHNA…APLY), and 379 to 417 (GHGD…AEDT).

It belongs to the WD repeat WDR12/YTM1 family.

The protein resides in the nucleus. The protein localises to the nucleolus. It is found in the nucleoplasm. Its function is as follows. Required for maturation of ribosomal RNAs and formation of the large ribosomal subunit. This Drosophila simulans (Fruit fly) protein is Ribosome biogenesis protein WDR12 homolog.